The primary structure comprises 211 residues: Probable GTP-binding protein EngB (211 aa).

The EngB-type G domain occupies 13-188; sequence SGYEIAFAGR…ASVMAGRLHF (176 aa). GTP contacts are provided by residues 21 to 28, 48 to 52, 67 to 70, 134 to 137, and 167 to 169; these read GRSNAGKS, GRTQM, DLPG, TKAD, and FSS. Mg(2+)-binding residues include Ser28 and Thr50.

This sequence belongs to the TRAFAC class TrmE-Era-EngA-EngB-Septin-like GTPase superfamily. EngB GTPase family. The cofactor is Mg(2+).

In terms of biological role, necessary for normal cell division and for the maintenance of normal septation. This Acinetobacter baumannii (strain ATCC 17978 / DSM 105126 / CIP 53.77 / LMG 1025 / NCDC KC755 / 5377) protein is Probable GTP-binding protein EngB.